A 287-amino-acid polypeptide reads, in one-letter code: Pantothenate synthetase (287 aa).

An ATP-binding site is contributed by 30–37 (MGNLHSGH). The active-site Proton donor is His37. A (R)-pantoate-binding site is contributed by Gln61. Gln61 provides a ligand contact to beta-alanine. Residue 149 to 152 (GEKD) participates in ATP binding. Gln155 lines the (R)-pantoate pocket. Residues Val178 and 186 to 189 (LSSR) contribute to the ATP site.

It belongs to the pantothenate synthetase family. In terms of assembly, homodimer.

Its subcellular location is the cytoplasm. It carries out the reaction (R)-pantoate + beta-alanine + ATP = (R)-pantothenate + AMP + diphosphate + H(+). Its pathway is cofactor biosynthesis; (R)-pantothenate biosynthesis; (R)-pantothenate from (R)-pantoate and beta-alanine: step 1/1. Its function is as follows. Catalyzes the condensation of pantoate with beta-alanine in an ATP-dependent reaction via a pantoyl-adenylate intermediate. This is Pantothenate synthetase from Pseudomonas putida (strain GB-1).